The primary structure comprises 87 residues: Small ribosomal subunit protein uS15 (87 aa).

Residues 1 to 22 are disordered; it reads MSEINKAEIVASNARAPSDTGS.

It belongs to the universal ribosomal protein uS15 family. Part of the 30S ribosomal subunit. Forms a bridge to the 50S subunit in the 70S ribosome, contacting the 23S rRNA.

Its function is as follows. One of the primary rRNA binding proteins, it binds directly to 16S rRNA where it helps nucleate assembly of the platform of the 30S subunit by binding and bridging several RNA helices of the 16S rRNA. Forms an intersubunit bridge (bridge B4) with the 23S rRNA of the 50S subunit in the ribosome. This chain is Small ribosomal subunit protein uS15, found in Leptothrix cholodnii (strain ATCC 51168 / LMG 8142 / SP-6) (Leptothrix discophora (strain SP-6)).